Here is an 853-residue protein sequence, read N- to C-terminus: Penicillin-binding protein 1A (853 aa).

Topologically, residues 1–6 (MRIAKL) are cytoplasmic. The helical; Signal-anchor for type II membrane protein transmembrane segment at 7-27 (ILNTLLTLCILGLVAGGMLYF) threads the bilayer. Over 28-853 (HLKSELQQPM…TPATQPQELF (826 aa)) the chain is Periplasmic. The transglycosylase stretch occupies residues 37 to 205 (MQIYTADGKL…STMNPLYSLK (169 aa)). Glutamate 75 serves as the catalytic Proton donor; for transglycosylase activity. Residues 387–681 (QRANGEWQLG…RVISGELAFL (295 aa)) form a transpeptidase region. Serine 441 serves as the catalytic Acyl-ester intermediate; for transpeptidase activity. Residues 615–636 (NALKPTDDSTNGEELDQQPETV) are disordered.

In the N-terminal section; belongs to the glycosyltransferase 51 family. This sequence in the C-terminal section; belongs to the transpeptidase family.

The protein localises to the cell inner membrane. It catalyses the reaction [GlcNAc-(1-&gt;4)-Mur2Ac(oyl-L-Ala-gamma-D-Glu-L-Lys-D-Ala-D-Ala)](n)-di-trans,octa-cis-undecaprenyl diphosphate + beta-D-GlcNAc-(1-&gt;4)-Mur2Ac(oyl-L-Ala-gamma-D-Glu-L-Lys-D-Ala-D-Ala)-di-trans,octa-cis-undecaprenyl diphosphate = [GlcNAc-(1-&gt;4)-Mur2Ac(oyl-L-Ala-gamma-D-Glu-L-Lys-D-Ala-D-Ala)](n+1)-di-trans,octa-cis-undecaprenyl diphosphate + di-trans,octa-cis-undecaprenyl diphosphate + H(+). The catalysed reaction is Preferential cleavage: (Ac)2-L-Lys-D-Ala-|-D-Ala. Also transpeptidation of peptidyl-alanyl moieties that are N-acyl substituents of D-alanine.. It participates in cell wall biogenesis; peptidoglycan biosynthesis. Its function is as follows. Cell wall formation. Synthesis of cross-linked peptidoglycan from the lipid intermediates. The enzyme has a penicillin-insensitive transglycosylase N-terminal domain (formation of linear glycan strands) and a penicillin-sensitive transpeptidase C-terminal domain (cross-linking of the peptide subunits). This Haemophilus influenzae (strain ATCC 51907 / DSM 11121 / KW20 / Rd) protein is Penicillin-binding protein 1A (mrcA).